We begin with the raw amino-acid sequence, 164 residues long: Probable ubiquitin-conjugating enzyme E2 7 (164 aa).

The UBC core domain occupies 3–163 (QSSLLLKKQL…VAQCVRRSQE (161 aa)). Cys-88 functions as the Glycyl thioester intermediate in the catalytic mechanism.

Belongs to the ubiquitin-conjugating enzyme family.

The catalysed reaction is S-ubiquitinyl-[E1 ubiquitin-activating enzyme]-L-cysteine + [E2 ubiquitin-conjugating enzyme]-L-cysteine = [E1 ubiquitin-activating enzyme]-L-cysteine + S-ubiquitinyl-[E2 ubiquitin-conjugating enzyme]-L-cysteine.. The protein operates within protein modification; protein ubiquitination. Catalyzes the covalent attachment of ubiquitin to other proteins. The protein is Probable ubiquitin-conjugating enzyme E2 7 (ubc-7) of Caenorhabditis elegans.